The following is a 1017-amino-acid chain: Probable DNA ligase (1017 aa).

The interval 1–363 is unknown; it reads MPWDVKFSHG…PACATPLHAP (363 aa). Residues 326–352 form a disordered region; it reads GIRSSPPQVRAGDATPSSRSSGDAGVA. The interval 364-1017 is DNA ligase; the sequence is DSFARFVAAA…GARPPPAASD (654 aa). E667 contributes to the ATP binding site. Residue K669 is the N6-AMP-lysine intermediate of the active site. The ATP site is built by R674, R689, E717, R860, and K866.

It in the C-terminal section; belongs to the ATP-dependent DNA ligase family. Requires Mg(2+) as cofactor.

It catalyses the reaction ATP + (deoxyribonucleotide)n-3'-hydroxyl + 5'-phospho-(deoxyribonucleotide)m = (deoxyribonucleotide)n+m + AMP + diphosphate.. DNA ligase that seals nicks in double-stranded DNA during DNA replication, DNA recombination and DNA repair. The sequence is that of Probable DNA ligase (lig) from Opitutus terrae (strain DSM 11246 / JCM 15787 / PB90-1).